The chain runs to 160 residues: MLVLLAAIFVVHIATCVMLFVSTIANVWVVSDSINASVGLWRNCTSGDCSGGLSYGHEDALKAVQAFMILSIIFSVISLIIFVFQLFTMEKGNRFFLSGATMLVCWLCVLIGASIYTHRYANGDSNTFDRSHHGYSFILAWICFCFSFVVGVLYLVLRKK.

A helical membrane pass occupies residues 1–21 (MLVLLAAIFVVHIATCVMLFV). Residues N35 and N43 are each glycosylated (N-linked (GlcNAc...) asparagine). The next 3 membrane-spanning stretches (helical) occupy residues 67–87 (FMILSIIFSVISLIIFVFQLF), 95–115 (FFLSGATMLVCWLCVLIGASI), and 137–157 (FILAWICFCFSFVVGVLYLVL).

This sequence belongs to the PMP-22/EMP/MP20 family. Most abundant in squamous epithelia.

The protein localises to the membrane. In Oryctolagus cuniculus (Rabbit), this protein is Epithelial membrane protein 1 (EMP1).